A 260-amino-acid chain; its full sequence is Thiamine thiazole synthase (260 aa).

NAD(+)-binding positions include A36, E55 to Q56, G63, and H154 to D156. Residues D156 and H171 each coordinate Fe cation. M224 serves as a coordination point for NAD(+). R234 is a binding site for glycine.

It belongs to the THI4 family. Homooctamer; tetramer of dimers. The cofactor is Fe(2+).

The enzyme catalyses hydrogen sulfide + glycine + NAD(+) = ADP-5-ethyl-4-methylthiazole-2-carboxylate + nicotinamide + 3 H2O + H(+). It functions in the pathway cofactor biosynthesis; thiamine diphosphate biosynthesis. Functionally, involved in the biosynthesis of the thiazole moiety of thiamine. Catalyzes the conversion of NAD and glycine to adenosine diphosphate 5-(2-hydroxyethyl)-4-methylthiazole-2-carboxylate (ADT), an adenylated thiazole intermediate, using free sulfide as a source of sulfur. The polypeptide is Thiamine thiazole synthase (Methanosarcina mazei (strain ATCC BAA-159 / DSM 3647 / Goe1 / Go1 / JCM 11833 / OCM 88) (Methanosarcina frisia)).